The sequence spans 332 residues: 2,3-bisphosphoglycerate-dependent phosphoglycerate mutase 2 (332 aa).

Residues 1–48 constitute a chloroplast transit peptide; it reads MATSTTMSHQAIGSVVSQRPFKASQFLKEPLNNVPMKFRQKRFKIEAT. Residues 85-92, 98-99, Arg-135, 189-192, Lys-200, 216-217, and 260-261 contribute to the substrate site; these read RHGESLWN, TG, ERMY, RR, and GN. His-86 (tele-phosphohistidine intermediate) is an active-site residue. The Proton donor/acceptor role is filled by Glu-189.

This sequence belongs to the phosphoglycerate mutase family. BPG-dependent PGAM subfamily.

It is found in the plastid. It localises to the chloroplast. It catalyses the reaction (2R)-2-phosphoglycerate = (2R)-3-phosphoglycerate. The protein operates within carbohydrate degradation; glycolysis; pyruvate from D-glyceraldehyde 3-phosphate: step 3/5. Catalyzes the interconversion of 2-phosphoglycerate and 3-phosphoglycerate. The sequence is that of 2,3-bisphosphoglycerate-dependent phosphoglycerate mutase 2 from Arabidopsis thaliana (Mouse-ear cress).